We begin with the raw amino-acid sequence, 489 residues long: Homoserine O-acetyltransferase (489 aa).

The AB hydrolase-1 domain occupies 69 to 438; it reads LLLCHALSGS…AEGHDGFLLE (370 aa). Serine 163 serves as the catalytic Nucleophile. The interval 255–329 is disordered; it reads ASRHPYPDRL…QTTDSSSLNQ (75 aa). Over residues 280 to 290 the composition is skewed to basic and acidic residues; it reads EGNRNRRERPC. A compositionally biased stretch (low complexity) spans 299–329; that stretch reads SESALNSPASSVSSLPSLGASQTTDSSSLNQ. Catalysis depends on residues aspartate 403 and histidine 432.

Belongs to the AB hydrolase superfamily. MetX family.

The protein localises to the cytoplasm. It carries out the reaction L-homoserine + acetyl-CoA = O-acetyl-L-homoserine + CoA. The protein operates within amino-acid biosynthesis; L-methionine biosynthesis via de novo pathway; O-acetyl-L-homoserine from L-homoserine: step 1/1. Its function is as follows. Commits homoserine to the methionine biosynthesis pathway by catalyzing its O-acetylation. This Schizosaccharomyces pombe (strain 972 / ATCC 24843) (Fission yeast) protein is Homoserine O-acetyltransferase (met6).